The primary structure comprises 100 residues: Large ribosomal subunit protein bL28 (100 aa).

This sequence belongs to the bacterial ribosomal protein bL28 family.

The sequence is that of Large ribosomal subunit protein bL28 from Methylobacterium radiotolerans (strain ATCC 27329 / DSM 1819 / JCM 2831 / NBRC 15690 / NCIMB 10815 / 0-1).